Consider the following 255-residue polypeptide: ATP-dependent L-serine kinase (255 aa).

E36 is an active-site residue. Residue V74 coordinates O-phospho-L-serine. D75 contributes to the Mg(2+) binding site. The O-phospho-L-serine site is built by G76, H77, H78, W108, K234, T236, and H238.

The protein belongs to the SerK family. Mg(2+) serves as cofactor.

It carries out the reaction L-serine + ATP = O-phospho-L-serine + ADP + H(+). Free serine kinase that uses ATP to phosphorylate L-serine to yield O-phospho-L-serine and ADP. The sequence is that of ATP-dependent L-serine kinase from Desulfurococcus mucosus (strain ATCC 35584 / DSM 2162 / JCM 9187 / O7/1).